The primary structure comprises 328 residues: Putative glycosyltransferase 41 (328 aa).

The protein belongs to the glycosyltransferase group 1 family. Glycosyltransferase 4 subfamily.

The polypeptide is Putative glycosyltransferase 41 (SIFV0041) (Sulfolobus islandicus filamentous virus (isolate Iceland/Hveragerdi) (SIFV)).